Here is a 330-residue protein sequence, read N- to C-terminus: Glycerol-3-phosphate dehydrogenase [NAD(P)+] (330 aa).

The NADPH site is built by Ser10, Trp11, Arg31, and Lys105. Sn-glycerol 3-phosphate-binding residues include Lys105, Gly135, and Ser137. Position 139 (Ala139) interacts with NADPH. Positions 190, 243, 253, 254, and 255 each coordinate sn-glycerol 3-phosphate. Catalysis depends on Lys190, which acts as the Proton acceptor. Arg254 serves as a coordination point for NADPH. Residues Val278 and Glu280 each contribute to the NADPH site.

It belongs to the NAD-dependent glycerol-3-phosphate dehydrogenase family.

It localises to the cytoplasm. The catalysed reaction is sn-glycerol 3-phosphate + NAD(+) = dihydroxyacetone phosphate + NADH + H(+). The enzyme catalyses sn-glycerol 3-phosphate + NADP(+) = dihydroxyacetone phosphate + NADPH + H(+). It participates in membrane lipid metabolism; glycerophospholipid metabolism. Catalyzes the reduction of the glycolytic intermediate dihydroxyacetone phosphate (DHAP) to sn-glycerol 3-phosphate (G3P), the key precursor for phospholipid synthesis. The sequence is that of Glycerol-3-phosphate dehydrogenase [NAD(P)+] from Nitratidesulfovibrio vulgaris (strain ATCC 29579 / DSM 644 / CCUG 34227 / NCIMB 8303 / VKM B-1760 / Hildenborough) (Desulfovibrio vulgaris).